The sequence spans 455 residues: Tyramine receptor Ser-2 (455 aa).

Residues 1–60 (MFRNYTDSVQEMVLRAIDSIRDSVINASSAVSTTTLPPLDIPMTSMKPPSIIPTVELVLG) are Extracellular-facing. Residues N4 and N26 are each glycosylated (N-linked (GlcNAc...) asparagine). Residues 61-83 (TITYLVIIAMTVVGNTLVVVAVF) form a helical membrane-spanning segment. The Cytoplasmic segment spans residues 84-93 (SYRPLKKVQN). The chain crosses the membrane as a helical span at residues 94 to 115 (YFLVSLAASDLAVAIFVMPLHV). The Extracellular portion of the chain corresponds to 116-133 (VTFLAGGKWLLGVTVCQF). A disulfide bridge links C131 with C209. A helical transmembrane segment spans residues 134–154 (FTTADILLCTSSILNLCAIAL). Residues 155 to 174 (DRYWAIHNPINYAQKRTTKF) are Cytoplasmic-facing. The chain crosses the membrane as a helical span at residues 175 to 197 (VCIVIVIVWILSMLISVPPIIGW). Topologically, residues 198–221 (NNWQENMMEDSCGLSTEKAFVVFS) are extracellular. A helical transmembrane segment spans residues 222–243 (AAGSFFLPLLVMVVVYVKIFIS). The Cytoplasmic portion of the chain corresponds to 244–370 (ARQRIRTNRG…VAKEKRAAKT (127 aa)). The helical transmembrane segment at 371 to 392 (IAVIIFVFSFCWLPFFVAYVIR) threads the bilayer. Topologically, residues 393–407 (PFCETCKLHAKVEQA) are extracellular. A helical transmembrane segment spans residues 408–428 (FTWLGYINSSLNPFLYGILNL). Residues 429–455 (EFRRAFKKILCPKAVLEQRRRRMSAQP) lie on the Cytoplasmic side of the membrane.

It belongs to the G-protein coupled receptor 1 family. The different isoforms are expressed in specific, but overlapping sets of sensory, inter- and motor neurons, including AIY, AIZ and RIA interneurons. They are also expressed in pharyngeal cells, head muscles and excretory gland cells.

The protein localises to the cell membrane. Functionally, G-protein coupled receptor for tyramine, a known neurotransmitter and neuromodulator and direct precursor of octopamine. The rank order of potency is tyramine &gt; octopamine &gt; dopamine &gt; serotonin &gt; epinephrine = norepinephrine. The protein is Tyramine receptor Ser-2 (ser-2) of Caenorhabditis elegans.